The primary structure comprises 378 residues: Queuine tRNA-ribosyltransferase (378 aa).

Asp-90 (proton acceptor) is an active-site residue. Substrate-binding positions include 90-94 (DSGGY), Asp-152, Gln-194, and Gly-223. The interval 254–260 (GVGKPED) is RNA binding. Asp-273 (nucleophile) is an active-site residue. Residues 278–282 (TRNAR) are RNA binding; important for wobble base 34 recognition. Cys-311, Cys-313, Cys-316, and His-342 together coordinate Zn(2+).

It belongs to the queuine tRNA-ribosyltransferase family. As to quaternary structure, homodimer. Within each dimer, one monomer is responsible for RNA recognition and catalysis, while the other monomer binds to the replacement base PreQ1. Requires Zn(2+) as cofactor.

It catalyses the reaction 7-aminomethyl-7-carbaguanine + guanosine(34) in tRNA = 7-aminomethyl-7-carbaguanosine(34) in tRNA + guanine. It functions in the pathway tRNA modification; tRNA-queuosine biosynthesis. Catalyzes the base-exchange of a guanine (G) residue with the queuine precursor 7-aminomethyl-7-deazaguanine (PreQ1) at position 34 (anticodon wobble position) in tRNAs with GU(N) anticodons (tRNA-Asp, -Asn, -His and -Tyr). Catalysis occurs through a double-displacement mechanism. The nucleophile active site attacks the C1' of nucleotide 34 to detach the guanine base from the RNA, forming a covalent enzyme-RNA intermediate. The proton acceptor active site deprotonates the incoming PreQ1, allowing a nucleophilic attack on the C1' of the ribose to form the product. After dissociation, two additional enzymatic reactions on the tRNA convert PreQ1 to queuine (Q), resulting in the hypermodified nucleoside queuosine (7-(((4,5-cis-dihydroxy-2-cyclopenten-1-yl)amino)methyl)-7-deazaguanosine). The polypeptide is Queuine tRNA-ribosyltransferase (Aquifex aeolicus (strain VF5)).